Consider the following 398-residue polypeptide: NADH-quinone oxidoreductase subunit D (398 aa).

This sequence belongs to the complex I 49 kDa subunit family. NDH-1 is composed of 14 different subunits. Subunits NuoB, C, D, E, F, and G constitute the peripheral sector of the complex.

It is found in the cell inner membrane. The enzyme catalyses a quinone + NADH + 5 H(+)(in) = a quinol + NAD(+) + 4 H(+)(out). Functionally, NDH-1 shuttles electrons from NADH, via FMN and iron-sulfur (Fe-S) centers, to quinones in the respiratory chain. The immediate electron acceptor for the enzyme in this species is believed to be ubiquinone. Couples the redox reaction to proton translocation (for every two electrons transferred, four hydrogen ions are translocated across the cytoplasmic membrane), and thus conserves the redox energy in a proton gradient. The polypeptide is NADH-quinone oxidoreductase subunit D (Bradyrhizobium sp. (strain ORS 278)).